We begin with the raw amino-acid sequence, 591 residues long: Maintenance of mitochondrial morphology protein 1 (591 aa).

Residues 1 to 83 are Lumenal-facing; sequence MGFNIPWNGT…AQPSLSFTQG (83 aa). Residues 84–104 form a helical membrane-spanning segment; the sequence is LLVGQLSVVLLIGAFIKFFIF. Residues 105–591 are Cytoplasmic-facing; the sequence is GEAPPPPSRS…GSMPDSVAVT (487 aa). Disordered stretches follow at residues 138–159, 170–189, 334–398, and 479–591; these read PRTL…SSST, YSAT…VHHS, PGTS…KHAH, and EAEA…VAVT. Composition is skewed to polar residues over residues 146–159 and 170–179; these read STSN…SSST and YSATPTNPTS. The segment covering 180-189 has biased composition (basic residues); the sequence is KHGRSRVHHS. Residues 192–462 enclose the SMP-LTD domain; sequence QPESLDWFNV…EPRVQVVGLP (271 aa). Positions 336-371 are enriched in polar residues; the sequence is TSDQTMGPSASPPNQSTSTETASINDQTSEGQSTQR. The span at 379–389 shows a compositional bias: low complexity; it reads PTNSTPTAATA. Gly residues-rich tracts occupy residues 496–525 and 536–550; these read TAGG…GMGY and GDGG…GAGG. The span at 563 to 578 shows a compositional bias: basic and acidic residues; it reads GGDDGEGPGRRSDERF.

This sequence belongs to the MMM1 family. Homodimer. Component of the ER-mitochondria encounter structure (ERMES) or MDM complex, composed of MMM1, MDM10, MDM12 and MDM34. An MMM1 homodimer associates with one molecule of MDM12 on each side in a pairwise head-to-tail manner, and the SMP-LTD domains of MMM1 and MDM12 generate a continuous hydrophobic tunnel for phospholipid trafficking.

It is found in the endoplasmic reticulum membrane. In terms of biological role, component of the ERMES/MDM complex, which serves as a molecular tether to connect the endoplasmic reticulum (ER) and mitochondria. Components of this complex are involved in the control of mitochondrial shape and protein biogenesis, and function in nonvesicular lipid trafficking between the ER and mitochondria. The MDM12-MMM1 subcomplex functions in the major beta-barrel assembly pathway that is responsible for biogenesis of all outer membrane beta-barrel proteins, and acts in a late step after the SAM complex. The MDM10-MDM12-MMM1 subcomplex further acts in the TOM40-specific pathway after the action of the MDM12-MMM1 complex. Essential for establishing and maintaining the structure of mitochondria and maintenance of mtDNA nucleoids. This Ajellomyces capsulatus (strain G186AR / H82 / ATCC MYA-2454 / RMSCC 2432) (Darling's disease fungus) protein is Maintenance of mitochondrial morphology protein 1.